Reading from the N-terminus, the 452-residue chain is Probable ECA polymerase (452 aa).

Helical transmembrane passes span 6–26, 37–57, 63–83, 118–138, 155–175, 181–201, 207–227, 228–248, 341–361, 378–398, and 410–430; these read FSGLLVVWLLSTLFIATLTWF, VFFSLLFLLTFFFGFPLTSVL, VGVAPPEILLQALLSAACFYG, VILMGIALVSVGIFFMHNGFL, GVALKRFFYFFIPAMLVVYFL, AWLFFLVSTVAFGLLTYMIVG, IIIAFAIFLFIGIIRGWISLW, MLAAAGVLGIVGMFWLALKRY, LVVMGGALFIPLGAIVVGLII, YKAAILHSFCFGAIFNMIVLA, and VFFLVVFGASLLVAKLLFWLF.

The protein belongs to the WzyE family. As to quaternary structure, probably part of a complex composed of WzxE, WzyE and WzzE.

Its subcellular location is the cell inner membrane. It functions in the pathway bacterial outer membrane biogenesis; enterobacterial common antigen biosynthesis. In terms of biological role, probably involved in the polymerization of enterobacterial common antigen (ECA) trisaccharide repeat units. The sequence is that of Probable ECA polymerase from Salmonella arizonae (strain ATCC BAA-731 / CDC346-86 / RSK2980).